The chain runs to 574 residues: Regulatory protein NPR4 (574 aa).

The disordered stretch occupies residues 1–21; that stretch reads MAATAIEPSSSISFTSSHLSN. The segment covering 9 to 20 has biased composition (low complexity); the sequence is SSSISFTSSHLS. Phosphoserine is present on serine 11. The 77-residue stretch at 54–130 folds into the BTB domain; that stretch reads TDAEIIIEEE…IYTGRLKPFP (77 aa). Residues 133 to 147 form a C2HC NPR-type zinc finger; sequence VSTCVDSVCAHDSCK. 4 residues coordinate Zn(2+): cysteine 136, cysteine 141, histidine 143, and cysteine 146. ANK repeat units follow at residues 252–280, 281–311, and 315–344; these read ERTGKVLKALDSDDVELVKLLLTESDITL, DQANGLHYAVAYSDPKVVTQVLDLDMADVNF, and RGYTVLHIAAMRREPTIIIPLIQKGANASD. Positions 373–516 are salicylic acid-binding core (SBC); that stretch reads EPSKYRLCID…MDQYMDEEIP (144 aa). Arginine 419 contacts salicylate. A disordered region spans residues 521–574; the sequence is PEKGTVKERRQKRMRYNELKNDVKKAYSKDKVARSCLSSSSPASSLREALENPT. Residues 535-553 show a composition bias toward basic and acidic residues; the sequence is RYNELKNDVKKAYSKDKVA. A compositionally biased stretch (low complexity) spans 554–567; that stretch reads RSCLSSSSPASSLR.

Belongs to the plant 'ANKYRIN-BTB/POZ' family. 'NPR1-like' subfamily. Forms homodimers, homotetramers and heterodimers with NPR3 in the presence of salicylic acid (SA). Interacts with TGA2, TGA3, TGA5, TGA6 and TGA7. Interacts with CUL3A, a core component of the cullin-RING ubiquitin ligases (CRL). Binds to NPR1; this interaction is disrupted by association with SA, probably due to conformational changes.

Its subcellular location is the nucleus. The protein operates within protein modification; protein ubiquitination. Salicylic acid (SA)-binding substrate-specific adapter of an E3 ubiquitin-protein ligase complex (CUL3-RBX1-BTB) which mediates the ubiquitination and subsequent proteasomal degradation of NPR1 in the absence of SA. Together with NPR3, acts as receptor of salicylic acid to monitor immunity in a NPR1-dependent manner and induce systemic acquired resistance (SAR). Involved in the regulation of basal defense responses against pathogens, and may be implicated in the cross-talk between the SA- and JA-dependent signaling pathways. In Arabidopsis thaliana (Mouse-ear cress), this protein is Regulatory protein NPR4.